The following is a 618-amino-acid chain: Zinc finger protein 48 (618 aa).

N-acetylmethionine is present on Met1. Composition is skewed to basic and acidic residues over residues 1–22 (MERA…EPQR) and 39–51 (EFEH…DLGF). Disordered stretches follow at residues 1–51 (MERA…DLGF) and 78–109 (LWVQ…ASSD). A Glycyl lysine isopeptide (Lys-Gly) (interchain with G-Cter in SUMO2) cross-link involves residue Lys87. 2 C2H2-type zinc fingers span residues 112–134 (AVCG…QRTH) and 140–162 (YKCG…QRTH). Residues 157 to 189 (KHQRTHSGEKPYRARPPAQGPPKIPRSRIPAGE) are disordered. Lys179 is covalently cross-linked (Glycyl lysine isopeptide (Lys-Gly) (interchain with G-Cter in SUMO2)). 2 C2H2-type zinc fingers span residues 192-214 (TICG…QRTH) and 220-242 (YKCG…QRTH). Residues 235-271 (RIKHQRTHRGEQPPRPVVPRRQPSRAATAATQGPKAQ) are disordered. Lys269 is covalently cross-linked (Glycyl lysine isopeptide (Lys-Gly) (interchain with G-Cter in SUMO2)). C2H2-type zinc fingers lie at residues 275 to 297 (YICT…QRSH) and 303 to 325 (FGCD…LRVH). A Glycyl lysine isopeptide (Lys-Gly) (interchain with G-Cter in SUMO2) cross-link involves residue Lys329. 2 consecutive C2H2-type zinc fingers follow at residues 331–353 (YLCP…LRTH) and 359–381 (HACP…RLTH). Residues 392–414 (YPLPALIPSPPPPPLGTSPPLTP) show a composition bias toward pro residues. Residues 392-457 (YPLPALIPSP…DKPHKCPECG (66 aa)) form a disordered region. A compositionally biased stretch (low complexity) spans 415–432 (RSPSHSGEPFGLPGLEPE). The C2H2-type 9 zinc-finger motif lies at 451–473 (HKCPECGKGFRRSSDLVKHHRVH). Residue Lys477 forms a Glycyl lysine isopeptide (Lys-Gly) (interchain with G-Cter in SUMO2) linkage. A C2H2-type 10 zinc finger spans residues 479-501 (YLCPECGKGFADSSARVKHLRTH). Positions 500-540 (THRGERARPPPPSTLLRPHNPPGPVPMAPRPRVRAQPSGPS) are disordered. A compositionally biased stretch (pro residues) spans 508–528 (PPPPSTLLRPHNPPGPVPMAP). 2 C2H2-type zinc fingers span residues 543-565 (HVCG…RRTH) and 571-593 (YKCA…QRGH). Lys610 participates in a covalent cross-link: Glycyl lysine isopeptide (Lys-Gly) (interchain with G-Cter in SUMO2).

It belongs to the krueppel C2H2-type zinc-finger protein family.

Its subcellular location is the nucleus. In terms of biological role, may be involved in transcriptional regulation. This is Zinc finger protein 48 (ZNF48) from Homo sapiens (Human).